The chain runs to 507 residues: RNA-binding protein Nova-1 (507 aa).

The disordered stretch occupies residues 1–44 (MMAAAPIQQNGTHTGVPIDLDPPDSRKRPLEAPPEAGSTKRTNT). Residues 27–43 (KRPLEAPPEAGSTKRTN) carry the Bipartite nuclear localization signal motif. Residues 49–116 (QYFLKVLIPS…EALNAVHGFI (68 aa)) enclose the KH 1 domain. Residues 139–171 (QTTVNPDRIKQTLPSSPTTTKSSPSDPMTTSRA) are disordered. Residues 150–169 (TLPSSPTTTKSSPSDPMTTS) are compositionally biased toward low complexity. A Phosphoserine modification is found at serine 154. KH domains lie at 171-237 (ANQV…VELI) and 421-488 (KDVV…QYLI). The required for RNA binding stretch occupies residues 419 to 503 (GSKDVVEIAV…YEQGVRAANP (85 aa)).

Interacts with PTBP2; the interaction is direct. Expressed in neurons of the cortex, sub-cortex, cerebellum and brainstem (at protein level). Expressed in motor neurons, but not in glia.

Its subcellular location is the nucleus. In terms of biological role, functions to regulate alternative splicing in neurons by binding pre-mRNA in a sequence-specific manner to activate exon inclusion or exclusion. It binds specifically to the sequences 5'-YCAY-3' and regulates splicing in only a subset of regulated exons. Binding to an exonic 5'-YCAY-3' cluster changes the protein complexes assembled on pre-mRNA, blocking U1 snRNP binding and exon inclusion, whereas binding to an intronic 5'-YCAY-3' cluster enhances spliceosome assembly and exon inclusion. Binding to 5'-YCAY-3' clusters results in a local and asymmetric action to regulate spliceosome assembly and alternative splicing in neurons. Binding to an exonic 5'-YCAY-3' cluster changed the protein complexes assembled on pre-mRNA, blocking U1 snRNP (small nuclear ribonucleoprotein) binding and exon inclusion, whereas binding to an intronic 5'-YCAY-3' cluster enhanced spliceosome assembly and exon inclusion. With NOVA1, they perform unique biological functions in different brain areas and cell types. Autoregulates its own expression by acting as a splicing repressor. Acts to activate the inclusion of exon E3A in the glycine receptor alpha-2 chain and of exon E9 in gamma-aminobutyric-acid receptor gamma-2 subunit via a distal downstream UCAU-rich intronic splicing enhancer. Acts to regulate a novel glycine receptor alpha-2 chain splice variant (alpha-2N) in developing spinal cord. The sequence is that of RNA-binding protein Nova-1 from Mus musculus (Mouse).